Here is a 164-residue protein sequence, read N- to C-terminus: Microfibrillar-associated protein 5 (164 aa).

A signal peptide spans 1–28 (MLFLGQKALLLVLAISIPSDWLPLGVSG). The short motif at 30–32 (RGD) is the Cell attachment site element. N-linked (GlcNAc...) asparagine glycosylation occurs at N70.

The protein belongs to the MFAP family. As to quaternary structure, interacts with TGFB2. Interacts with BMP2. Interacts with FBN1 (via N-terminal domain) and FBN2. Forms intermolecular disulfide bonds either with other MAGP-2 molecules or with other components of the microfibrils.

The protein resides in the secreted. It is found in the extracellular space. The protein localises to the extracellular matrix. In terms of biological role, may play a role in hematopoiesis. In the cardiovascular system, could regulate growth factors or participate in cell signaling in maintaining large vessel integrity. Component of the elastin-associated microfibrils. This is Microfibrillar-associated protein 5 (Mfap5) from Mus musculus (Mouse).